We begin with the raw amino-acid sequence, 98 residues long: NADH-ubiquinone oxidoreductase chain 4L (98 aa).

Helical transmembrane passes span methionine 1–methionine 21, serine 29–leucine 49, and isoleucine 61–valine 81.

It belongs to the complex I subunit 4L family. As to quaternary structure, core subunit of respiratory chain NADH dehydrogenase (Complex I) which is composed of 45 different subunits.

It localises to the mitochondrion inner membrane. It carries out the reaction a ubiquinone + NADH + 5 H(+)(in) = a ubiquinol + NAD(+) + 4 H(+)(out). In terms of biological role, core subunit of the mitochondrial membrane respiratory chain NADH dehydrogenase (Complex I) which catalyzes electron transfer from NADH through the respiratory chain, using ubiquinone as an electron acceptor. Part of the enzyme membrane arm which is embedded in the lipid bilayer and involved in proton translocation. The polypeptide is NADH-ubiquinone oxidoreductase chain 4L (MT-ND4L) (Muntiacus vuquangensis (Giant muntjac)).